The following is a 122-amino-acid chain: Large ribosomal subunit protein uL14c (122 aa).

The protein belongs to the universal ribosomal protein uL14 family. In terms of assembly, part of the 50S ribosomal subunit.

Its subcellular location is the plastid. In terms of biological role, binds to 23S rRNA. The protein is Large ribosomal subunit protein uL14c of Cuscuta reflexa (Southern Asian dodder).